Here is a 318-residue protein sequence, read N- to C-terminus: tRNA uridine(34) hydroxylase (318 aa).

The Rhodanese domain occupies 123–217; the sequence is EDDDTVIIDA…YGKDPETKSE (95 aa). Cys177 functions as the Cysteine persulfide intermediate in the catalytic mechanism.

It belongs to the TrhO family.

It carries out the reaction uridine(34) in tRNA + AH2 + O2 = 5-hydroxyuridine(34) in tRNA + A + H2O. Its function is as follows. Catalyzes oxygen-dependent 5-hydroxyuridine (ho5U) modification at position 34 in tRNAs. In Staphylococcus aureus (strain COL), this protein is tRNA uridine(34) hydroxylase.